A 497-amino-acid polypeptide reads, in one-letter code: Glycerol kinase (497 aa).

Thr12 serves as a coordination point for ADP. The ATP site is built by Thr12, Thr13, and Ser14. Residue Thr12 participates in sn-glycerol 3-phosphate binding. Arg16 lines the ADP pocket. Positions 82, 83, 134, and 243 each coordinate sn-glycerol 3-phosphate. The glycerol site is built by Arg82, Glu83, Tyr134, Asp243, and Gln244. Residues Thr265 and Gly308 each coordinate ADP. Positions 265, 308, 312, and 409 each coordinate ATP. ADP-binding residues include Gly409 and Asn413.

The protein belongs to the FGGY kinase family.

It carries out the reaction glycerol + ATP = sn-glycerol 3-phosphate + ADP + H(+). Its pathway is polyol metabolism; glycerol degradation via glycerol kinase pathway; sn-glycerol 3-phosphate from glycerol: step 1/1. With respect to regulation, inhibited by fructose 1,6-bisphosphate (FBP). Key enzyme in the regulation of glycerol uptake and metabolism. Catalyzes the phosphorylation of glycerol to yield sn-glycerol 3-phosphate. In Nitratidesulfovibrio vulgaris (strain ATCC 29579 / DSM 644 / CCUG 34227 / NCIMB 8303 / VKM B-1760 / Hildenborough) (Desulfovibrio vulgaris), this protein is Glycerol kinase.